The sequence spans 202 residues: ATP-dependent Clp protease proteolytic subunit 3 (202 aa).

Ser93 acts as the Nucleophile in catalysis. His118 is an active-site residue.

The protein belongs to the peptidase S14 family. As to quaternary structure, fourteen ClpP subunits assemble into 2 heptameric rings which stack back to back to give a disk-like structure with a central cavity, resembling the structure of eukaryotic proteasomes.

The protein localises to the cytoplasm. It catalyses the reaction Hydrolysis of proteins to small peptides in the presence of ATP and magnesium. alpha-casein is the usual test substrate. In the absence of ATP, only oligopeptides shorter than five residues are hydrolyzed (such as succinyl-Leu-Tyr-|-NHMec, and Leu-Tyr-Leu-|-Tyr-Trp, in which cleavage of the -Tyr-|-Leu- and -Tyr-|-Trp bonds also occurs).. Cleaves peptides in various proteins in a process that requires ATP hydrolysis. Has a chymotrypsin-like activity. Plays a major role in the degradation of misfolded proteins. This Rhodococcus jostii (strain RHA1) protein is ATP-dependent Clp protease proteolytic subunit 3.